The sequence spans 142 residues: Small ribosomal subunit protein eS6 (142 aa).

The segment at 117–142 is disordered; it reads EKPLDELAPKKEKKEGAAGGRAPAKK. The segment covering 118-132 has biased composition (basic and acidic residues); sequence KPLDELAPKKEKKEG.

It belongs to the eukaryotic ribosomal protein eS6 family.

This is Small ribosomal subunit protein eS6 from Methanocella arvoryzae (strain DSM 22066 / NBRC 105507 / MRE50).